The chain runs to 215 residues: Adenylate kinase (215 aa).

An ATP-binding site is contributed by 10–15 (GAGKGT). The segment at 30-59 (STGDMLRAAVKAETELGLKAKSVMDSGGLV) is NMP. AMP contacts are provided by residues Thr-31, Arg-36, 57–59 (GLV), 85–88 (GFPR), and Gln-92. The LID stretch occupies residues 122–159 (GRRVHEGSGRIYHTIFNPPKVEGIDDVTGEPLLQRKDD). Residues Arg-123 and 132–133 (IY) each bind ATP. AMP contacts are provided by Arg-156 and Arg-167. Residue Gly-201 participates in ATP binding.

This sequence belongs to the adenylate kinase family. In terms of assembly, monomer.

The protein localises to the cytoplasm. It catalyses the reaction AMP + ATP = 2 ADP. Its pathway is purine metabolism; AMP biosynthesis via salvage pathway; AMP from ADP: step 1/1. Catalyzes the reversible transfer of the terminal phosphate group between ATP and AMP. Plays an important role in cellular energy homeostasis and in adenine nucleotide metabolism. This chain is Adenylate kinase, found in Pseudomonas syringae pv. syringae (strain B728a).